The chain runs to 504 residues: Histidine--tRNA ligase (504 aa).

The protein belongs to the class-II aminoacyl-tRNA synthetase family. Homodimer.

The protein resides in the cytoplasm. The enzyme catalyses tRNA(His) + L-histidine + ATP = L-histidyl-tRNA(His) + AMP + diphosphate + H(+). The protein is Histidine--tRNA ligase (hisS) of Rhizobium meliloti (strain 1021) (Ensifer meliloti).